Consider the following 317-residue polypeptide: MYTKIIGTGSYLPEQVRTNADLEKMVETSDEWIVTRTGIRERHIAAPDETVATMGFTAANRAIEMAGIDKDQIGLIVVATTSATHAFPSAACQIQSMLGIKGCPAFDVAAACAGFTYALSIADQYVKSGAVKHALVVGSDVLARTCDPGDRGTIIIFGDGAGAAVLSASEEPGIISTHLHADGRYGELLTLPNADRVNPDNPIYLTMAGNEVFKVAVTELAHIVDETLAANNLDRSELDWLVPHQANLRIISATAKKLGMSMDNVVVTLDRHGNTSAASVPCALDEAVRDGRIKAGQLVLLEAFGGGFTWGSALIRF.

Active-site residues include C112 and H244. Residues 245-249 (QANLR) are ACP-binding. N274 is an active-site residue.

This sequence belongs to the thiolase-like superfamily. FabH family. As to quaternary structure, homodimer.

The protein localises to the cytoplasm. It catalyses the reaction malonyl-[ACP] + acetyl-CoA + H(+) = 3-oxobutanoyl-[ACP] + CO2 + CoA. It participates in lipid metabolism; fatty acid biosynthesis. Catalyzes the condensation reaction of fatty acid synthesis by the addition to an acyl acceptor of two carbons from malonyl-ACP. Catalyzes the first condensation reaction which initiates fatty acid synthesis and may therefore play a role in governing the total rate of fatty acid production. Possesses both acetoacetyl-ACP synthase and acetyl transacylase activities. Its substrate specificity determines the biosynthesis of branched-chain and/or straight-chain of fatty acids. The chain is Beta-ketoacyl-[acyl-carrier-protein] synthase III from Salmonella paratyphi A (strain ATCC 9150 / SARB42).